Here is a 288-residue protein sequence, read N- to C-terminus: Polyamine aminopropyltransferase (288 aa).

The region spanning 9–238 (ETLHDQFGQY…GIMTFAWATD (230 aa)) is the PABS domain. Residue glutamine 33 coordinates S-methyl-5'-thioadenosine. Residues histidine 64 and aspartate 88 each contribute to the spermidine site. S-methyl-5'-thioadenosine contacts are provided by residues glutamate 108 and 140-141 (DG). The active-site Proton acceptor is aspartate 158. Residue 158 to 161 (DCTD) participates in spermidine binding. Residue proline 165 participates in S-methyl-5'-thioadenosine binding.

It belongs to the spermidine/spermine synthase family. In terms of assembly, homodimer or homotetramer.

The protein resides in the cytoplasm. The catalysed reaction is S-adenosyl 3-(methylsulfanyl)propylamine + putrescine = S-methyl-5'-thioadenosine + spermidine + H(+). The protein operates within amine and polyamine biosynthesis; spermidine biosynthesis; spermidine from putrescine: step 1/1. In terms of biological role, catalyzes the irreversible transfer of a propylamine group from the amino donor S-adenosylmethioninamine (decarboxy-AdoMet) to putrescine (1,4-diaminobutane) to yield spermidine. The sequence is that of Polyamine aminopropyltransferase from Escherichia coli (strain UTI89 / UPEC).